The following is a 408-amino-acid chain: Argininosuccinate synthase (408 aa).

Residues 10-18 (AYSGGLDTS) and A37 each bind ATP. The L-citrulline site is built by Y90 and S95. Position 120 (G120) interacts with ATP. Residues T122, N126, and D127 each coordinate L-aspartate. N126 serves as a coordination point for L-citrulline. The L-citrulline site is built by R130, S181, S190, E266, and Y278.

It belongs to the argininosuccinate synthase family. Type 1 subfamily. As to quaternary structure, homotetramer.

It localises to the cytoplasm. It catalyses the reaction L-citrulline + L-aspartate + ATP = 2-(N(omega)-L-arginino)succinate + AMP + diphosphate + H(+). Its pathway is amino-acid biosynthesis; L-arginine biosynthesis; L-arginine from L-ornithine and carbamoyl phosphate: step 2/3. This chain is Argininosuccinate synthase, found in Cereibacter sphaeroides (strain ATCC 17025 / ATH 2.4.3) (Rhodobacter sphaeroides).